Reading from the N-terminus, the 1765-residue chain is Sodium channel protein type 11 subunit alpha (1765 aa).

The Cytoplasmic portion of the chain corresponds to 1–126; it reads MEERYYPVIF…PLRSLMIRIS (126 aa). One copy of the I repeat lies at 115–403; it reads FNPLRSLMIR…VTMAYEEQNR (289 aa). A helical membrane pass occupies residues 127–148; it reads VHSVFSMFIICTVIINCMFMAN. At 149–157 the chain is on the extracellular side; it reads SMERSFDND. A helical transmembrane segment spans residues 158-177; it reads IPEYVFIGIYILEAVIKILA. Over 178–189 the chain is Cytoplasmic; sequence RGFIVDEFSFLR. A helical membrane pass occupies residues 190–209; it reads DPWNWLDFIVIGTAIATCFP. Topologically, residues 210–216 are extracellular; the sequence is GSQVNLS. Asn214 carries an N-linked (GlcNAc...) asparagine glycan. Residues 217-236 form a helical; Voltage-sensor membrane-spanning segment; it reads ALRTFRVFRALKAISVISGL. Over 237-252 the chain is Cytoplasmic; it reads KVIVGALLRSVKKLVD. A helical transmembrane segment spans residues 253 to 266; it reads VMVLTLFCLSIFAL. At 267-339 the chain is on the extracellular side; the sequence is VGQQLFMGIL…PDNNYTKFDN (73 aa). An intrachain disulfide couples Cys280 to Cys317. N-linked (GlcNAc...) asparagine glycans are attached at residues Asn319 and Asn333. The pore-forming intramembrane region spans 340–364; sequence FGWSFLAMFRVMTQDSWERLYRQIL. The Extracellular portion of the chain corresponds to 365-371; the sequence is RTSGIYF. Residues 372 to 397 traverse the membrane as a helical segment; sequence VFFFVVVIFLGSFYLLNLTLAVVTMA. The Cytoplasmic segment spans residues 398 to 567; sequence YEEQNRNVAA…WLCIKKVLRT (170 aa). Residues 554 to 820 form an II repeat; that stretch reads CSPQWLCIKK…EGETRKTKVQ (267 aa). A helical transmembrane segment spans residues 568–591; sequence IMTDPFTELAITICIIINTVFLAV. At 592–602 the chain is on the extracellular side; the sequence is EHHNMDDNLKT. Residues 603 to 626 form a helical membrane-spanning segment; it reads ILKIGNWVFTGIFIAEMCLKIIAL. The Cytoplasmic portion of the chain corresponds to 627–634; it reads DPYHYFRH. A helical membrane pass occupies residues 635 to 656; that stretch reads GWNVFDSIVALLSLADVLYNTL. Topologically, residues 657–662 are extracellular; that stretch reads SDNNRS. Asn660 is a glycosylation site (N-linked (GlcNAc...) asparagine). Residues 663 to 682 form a helical; Voltage-sensor membrane-spanning segment; sequence FLASLRVLRVFKLAKSWPTL. At 683 to 697 the chain is on the cytoplasmic side; that stretch reads NTLIKIIGHSVGALG. Residues 698–720 form a helical membrane-spanning segment; that stretch reads NLTVVLTIVVFIFSVVGMRLFGT. Topologically, residues 721-741 are extracellular; the sequence is KFNKTAYATQERPRRRWHMDN. N-linked (GlcNAc...) asparagine glycosylation is present at Asn723. Residues 742 to 762 constitute an intramembrane region (pore-forming); it reads FYHSFLVVFRILCGEWIENMW. Topologically, residues 763–772 are extracellular; that stretch reads GCMQDMDGSP. Cys764 and Cys774 are joined by a disulfide. A helical transmembrane segment spans residues 773 to 798; that stretch reads LCIIVFVLIMVIGKLVVLNLFIALLL. Topologically, residues 799-1029 are cytoplasmic; sequence NSFSNEEKDG…WWNIRKTCYQ (231 aa). The III repeat unit spans residues 1022–1319; it reads NIRKTCYQIV…KKYYNAMKKL (298 aa). Residues 1030–1052 traverse the membrane as a helical segment; it reads IVKHSWFESFIIFVILLSSGALI. The Extracellular segment spans residues 1053–1066; sequence FEDVNLPSRPQVEK. A helical transmembrane segment spans residues 1067–1092; that stretch reads LLRCTDNIFTFIFLLEMILKWVAFGF. Residues 1093 to 1098 lie on the Cytoplasmic side of the membrane; it reads RRYFTS. Residues 1099-1116 traverse the membrane as a helical segment; sequence AWCWLDFLIVVVSVLSLM. Asn1117 is a topological domain (extracellular). Residues 1118-1139 traverse the membrane as a helical; Voltage-sensor segment; the sequence is LPSLKSFRTLRALRPLRALSQF. Topologically, residues 1140-1158 are cytoplasmic; sequence EGMKVVVYALISAIPAILN. A helical transmembrane segment spans residues 1159–1180; the sequence is VLLVCLIFWLVFCILGVNLFSG. The Extracellular segment spans residues 1181–1223; that stretch reads KFGRCINGTDINMYLDFTEVPNRSQCNISNYSWKVPQVNFDNV. Asn1187, Asn1202, Asn1207, and Asn1210 each carry an N-linked (GlcNAc...) asparagine glycan. Positions 1224–1245 form an intramembrane region, pore-forming; sequence GNAYLALLQVATYKGWLEIMNA. The Extracellular segment spans residues 1246–1261; the sequence is AVDSREKDEQPDFEAN. A helical membrane pass occupies residues 1262 to 1288; the sequence is LYAYLYFVVFIIFGSFFTLNLFIGVII. The Cytoplasmic segment spans residues 1289 to 1341; that stretch reads DNFNQQQKKLGGQDIFMTEEQKKYYNAMKKLGTKKPQKPIPRPLNKCQAFVFD. An IV repeat occupies 1328 to 1619; sequence IPRPLNKCQA…WEKFDPEASQ (292 aa). The chain crosses the membrane as a helical span at residues 1342-1365; the sequence is LVTSQVFDVIILGLIVLNMIIMMA. At 1366–1376 the chain is on the extracellular side; that stretch reads ESADQPKDVKK. Residues 1377–1400 form a helical membrane-spanning segment; the sequence is TFDILNIAFVVIFTIECLIKVFAL. Over 1401-1406 the chain is Cytoplasmic; it reads RQHYFT. Residues 1407–1430 form a helical membrane-spanning segment; that stretch reads NGWNLFDCVVVVLSIISTLVSRLE. At 1431 to 1440 the chain is on the extracellular side; that stretch reads DSDISFPPTL. The helical; Voltage-sensor transmembrane segment at 1441-1463 threads the bilayer; that stretch reads FRVVRLARIGRILRLVRAARGIR. Residues 1464–1478 lie on the Cytoplasmic side of the membrane; that stretch reads TLLFALMMSLPSLFN. Residues 1479–1501 traverse the membrane as a helical segment; that stretch reads IGLLLFLVMFIYAIFGMSWFSKV. Residues 1502–1515 are Extracellular-facing; sequence KKGSGIDDIFNFET. The pore-forming intramembrane region spans 1516–1538; that stretch reads FTGSMLCLFQITTSAGWDTLLNP. Residues 1539 to 1559 lie on the Extracellular side of the membrane; it reads MLEAKEHCNSSSQDSCQQPQI. Asn1547 is a glycosylation site (N-linked (GlcNAc...) asparagine). Residues 1560-1584 form a helical membrane-spanning segment; that stretch reads AVVYFVSYIIISFLIVVNMYIAVIL. Residues 1585 to 1765 lie on the Cytoplasmic side of the membrane; the sequence is ENFNTATEES…DVAKVKVHND (181 aa).

Belongs to the sodium channel (TC 1.A.1.10) family. Nav1.9/SCN11A subfamily. In terms of assembly, the voltage-resistant sodium channel consists of an ion conducting pore forming alpha-subunit regulated by one or more auxiliary subunits SCN1B, SCN2B and SCN3B. As to expression, expressed (at protein level) in myenteric sensory neurons. Expressed in small sensory neurons of the dorsal root ganglia (C-fiber neurons) and trigeminal ganglia.

Its subcellular location is the cell membrane. The catalysed reaction is Na(+)(in) = Na(+)(out). Activity is not sensitive to inhibition by tetrodotoxin. Functionally, sodium channel mediating the voltage-dependent sodium ion permeability of excitable membranes. Assuming opened or closed conformations in response to the voltage difference across the membrane, the protein forms a sodium-selective channel through which sodium ions may pass in accordance with their electrochemical gradient. Involved in membrane depolarization during action potential in nociceptors which function as key relay stations for the electrical transmission of pain signals from the periphery to the central nervous system. Also involved in rapid BDNF-evoked neuronal depolarization. The protein is Sodium channel protein type 11 subunit alpha of Rattus norvegicus (Rat).